We begin with the raw amino-acid sequence, 81 residues long: Large ribosomal subunit protein bL31 (81 aa).

The protein belongs to the bacterial ribosomal protein bL31 family. Type A subfamily. In terms of assembly, part of the 50S ribosomal subunit.

Binds the 23S rRNA. This is Large ribosomal subunit protein bL31 (rpmE) from Fusobacterium nucleatum subsp. nucleatum (strain ATCC 25586 / DSM 15643 / BCRC 10681 / CIP 101130 / JCM 8532 / KCTC 2640 / LMG 13131 / VPI 4355).